The sequence spans 125 residues: UPF0251 protein Dhaf_1981 (125 aa).

Belongs to the UPF0251 family.

This Desulfitobacterium hafniense (strain DSM 10664 / DCB-2) protein is UPF0251 protein Dhaf_1981.